The following is a 311-amino-acid chain: Acetyl-coenzyme A carboxylase carboxyl transferase subunit beta (311 aa).

Residues 32–299 (LWVKCPVSEE…TSMPAALTPP (268 aa)) enclose the CoA carboxyltransferase N-terminal domain. The interval 291–311 (SMPAALTPPAPDHVVADGGSH) is disordered.

It belongs to the AccD/PCCB family. Acetyl-CoA carboxylase is a heterohexamer composed of biotin carboxyl carrier protein (AccB), biotin carboxylase (AccC) and two subunits each of ACCase subunit alpha (AccA) and ACCase subunit beta (AccD).

The protein resides in the cytoplasm. It carries out the reaction N(6)-carboxybiotinyl-L-lysyl-[protein] + acetyl-CoA = N(6)-biotinyl-L-lysyl-[protein] + malonyl-CoA. Its pathway is lipid metabolism; malonyl-CoA biosynthesis; malonyl-CoA from acetyl-CoA: step 1/1. Functionally, component of the acetyl coenzyme A carboxylase (ACC) complex. Biotin carboxylase (BC) catalyzes the carboxylation of biotin on its carrier protein (BCCP) and then the CO(2) group is transferred by the transcarboxylase to acetyl-CoA to form malonyl-CoA. The sequence is that of Acetyl-coenzyme A carboxylase carboxyl transferase subunit beta from Maricaulis maris (strain MCS10) (Caulobacter maris).